The primary structure comprises 201 residues: Thylakoid membrane protein slr1796 (201 aa).

A helical membrane pass occupies residues 16 to 36; it reads FLIVSLAFAMLLLGIWGTLPF.

Its subcellular location is the cellular thylakoid membrane. This chain is Thylakoid membrane protein slr1796, found in Synechocystis sp. (strain ATCC 27184 / PCC 6803 / Kazusa).